Consider the following 434-residue polypeptide: MGRIANQTTASNDTDPFGRNEEVAKMEITVLSVTFFVAVIGNLSVLLAMHNTKKKSSRMHLFIKHLSLADMVVAFFQVLPQLCWEITFRFYGPDFLCRIVKHLQVLGMFASTYMMVMMTLDRYIAICHPLKTLQQPTQRAYIMIGSTWLCSLLLSTPQYFIFSLSEIQNGSYVYDCWGHFIEPWGIRAYITWITVGIFLIPVIILMICYGFICHSIWKNIKCKTMRGTRNTKDGMIGKVSVSSVTIISRAKLRTVKMTLVIVLAYIVCWAPFFIVQMWSVWDENFSWDDSENAAVTLSALLASLNSCCNPWIYMLFSGHLLYDFLRCFPCCKKPRNMLQKEDSDSSIRRNTLLTKLAAGRMTNDGFGSWRDPCNSRKSSQSIGLDCFCKSSQCLEHDCSRKSSQCIPLDCSRKSSQCIPLDCSRKSSQCMSKES.

Residues 1–27 lie on the Extracellular side of the membrane; sequence MGRIANQTTASNDTDPFGRNEEVAKME. 2 N-linked (GlcNAc...) asparagine glycosylation sites follow: Asn-6 and Asn-12. Residues 28–48 form a helical membrane-spanning segment; that stretch reads ITVLSVTFFVAVIGNLSVLLA. At 49 to 67 the chain is on the cytoplasmic side; that stretch reads MHNTKKKSSRMHLFIKHLS. The helical transmembrane segment at 68–88 threads the bilayer; the sequence is LADMVVAFFQVLPQLCWEITF. Residues 89-98 are Extracellular-facing; it reads RFYGPDFLCR. An intrachain disulfide couples Cys-97 to Cys-176. Residues 99–119 traverse the membrane as a helical segment; that stretch reads IVKHLQVLGMFASTYMMVMMT. Residues 120–141 lie on the Cytoplasmic side of the membrane; it reads LDRYIAICHPLKTLQQPTQRAY. A helical transmembrane segment spans residues 142–162; that stretch reads IMIGSTWLCSLLLSTPQYFIF. The Extracellular portion of the chain corresponds to 163–191; sequence SLSEIQNGSYVYDCWGHFIEPWGIRAYIT. Residues 192–212 traverse the membrane as a helical segment; that stretch reads WITVGIFLIPVIILMICYGFI. Residues 213–257 lie on the Cytoplasmic side of the membrane; the sequence is CHSIWKNIKCKTMRGTRNTKDGMIGKVSVSSVTIISRAKLRTVKM. Residues 258-278 form a helical membrane-spanning segment; that stretch reads TLVIVLAYIVCWAPFFIVQMW. The Extracellular segment spans residues 279-295; the sequence is SVWDENFSWDDSENAAV. The chain crosses the membrane as a helical span at residues 296 to 316; it reads TLSALLASLNSCCNPWIYMLF. The Cytoplasmic segment spans residues 317–434; the sequence is SGHLLYDFLR…KSSQCMSKES (118 aa).

It belongs to the G-protein coupled receptor 1 family. Vasopressin/oxytocin receptor subfamily. In terms of tissue distribution, expressed in pituitary, liver, gills, swim bladder and lateral line.

It localises to the cell membrane. Its function is as follows. Binds to vasotocin. Produces an induction of membrane chloride currents indicating that it is coupled to the inositol phosphate/calcium pathway. The chain is [Arg8]-vasotocin receptor from Catostomus commersonii (White sucker).